A 258-amino-acid chain; its full sequence is MRTEVKGKVVIVTEKGEMKEYDNQIQSSFISSLINYARIGGTISNYSYNIQLLNQNTLLGSYTGGLQYKQVSSSLQAIFTFVIPTVPPSVNTLQLYVSSSLGTFLVATLNNVSLPISSAIQIIWAISFSISSSDYFTPYLVFAFFAPPSSTIPFVNTPLPNVQSAITSIQNVGYLTSPPTYYATYNGQYVQVAPTFTNNTISIEYTIPNINTTSTFTNVTIVTTATSGYVNLLAQEQQITVQVGQVLSIEYNTTWSTS.

This is an uncharacterized protein from Acidianus filamentous virus 2 (isolate Italy/Pozzuoli) (AFV-2).